Here is a 797-residue protein sequence, read N- to C-terminus: MRSHLARNATTTTPNVYRRLHAAVGHHHGLLRPCSATALSARRCLFDCQHDVAHIPRDVALCTRTSKRTFISLFTPKPERFVKLPHFDPGYNVLLQYRKSEVEQERPPPRDQLVTAFKKLTKFKADTNRPLNPNQAFLLRTVLHYLLVTKPEADAPVDLKMSDLENAMDAALLPPKGSPEFHLALARLLHEEIMRRRLILLNPEERKVHLTKDDFARYIKALTQYGGSLEAAGRVKEFWQQLKDERSAVYFRGSGRIWIMVLEGLANEGREEELLQFWEEAQETGGIKYIPGVHQIFVTYYARQDKIEETKQWYSKPIHSGFSPTGETLLELVRSSRRSSQKWNEWLLPVFEQVVQDKFAKKGSLDAFLQWSVLALDKGPDGIKTYLQTMASGDFYQSHEVKVDATTINRLMQAAQEKGNPYMAERFWQLAQDFNIKANVHTYLNQMSYRLDANDIEGAHQIFSKLASGAVEVEFDEDLPVMNKYLRVLCAQQEPNIQHILTITSALEQRHAVLEPETIVALCLVFLNHDKKFDVIDTLSLHSVSISHIERQQIYKAFVDYICSPQTTTDRAWDAYSLLRQYFPETSVDDRVRLMESFFERKKPDMACLVFGHMRAHDDDNMHPTADIYVRCLEGLGRCPIPEQRPSDPASSLKMVHNMLKMDTRVEMNTRLYNALMLAYAAGGDPFTALDFWEEHITRSAEGPSYNSLAIVFWCCELIPLGDRYARPVWQKMLRMDLEVPQLGLTYNALPDPVSKDEFAAWAKEEYPEEWARLESKGQKETEFQGPVFNITRLFEA.

The N-terminal 69 residues, 1–69 (MRSHLARNAT…ALCTRTSKRT (69 aa)), are a transit peptide targeting the mitochondrion.

The protein resides in the mitochondrion. In terms of biological role, chaperone protein involved in the assembly of the mitochondrial NADH:ubiquinone oxidoreductase complex (complex I). The polypeptide is Complex I intermediate-associated protein 84, mitochondrial (cia84) (Neurospora crassa (strain ATCC 24698 / 74-OR23-1A / CBS 708.71 / DSM 1257 / FGSC 987)).